The chain runs to 364 residues: Chorismate synthase (364 aa).

The interval 41-60 is disordered; it reads MQHDLDRRRPGTSRYTTARR. NADP(+) contacts are provided by arginine 48 and arginine 54. FMN is bound by residues 125 to 127, 238 to 239, glycine 278, 293 to 297, and arginine 319; these read RSS, NA, and KPTSS.

This sequence belongs to the chorismate synthase family. As to quaternary structure, homotetramer. The cofactor is FMNH2.

It carries out the reaction 5-O-(1-carboxyvinyl)-3-phosphoshikimate = chorismate + phosphate. Its pathway is metabolic intermediate biosynthesis; chorismate biosynthesis; chorismate from D-erythrose 4-phosphate and phosphoenolpyruvate: step 7/7. In terms of biological role, catalyzes the anti-1,4-elimination of the C-3 phosphate and the C-6 proR hydrogen from 5-enolpyruvylshikimate-3-phosphate (EPSP) to yield chorismate, which is the branch point compound that serves as the starting substrate for the three terminal pathways of aromatic amino acid biosynthesis. This reaction introduces a second double bond into the aromatic ring system. The polypeptide is Chorismate synthase (Shewanella baltica (strain OS185)).